A 98-amino-acid chain; its full sequence is 10 kDa chaperonin (98 aa).

It belongs to the GroES chaperonin family. Forms stable complexes with CPN60 in the presence of ATP.

The protein resides in the cytoplasm. Seems to function only as a co-chaperone, along with cpn60, and in certain cases is essential for the discharge of biologically active proteins from cpn60. The sequence is that of 10 kDa chaperonin from Brassica napus (Rape).